A 153-amino-acid chain; its full sequence is UPF0178 protein CC_1215 (153 aa).

Belongs to the UPF0178 family.

The chain is UPF0178 protein CC_1215 from Caulobacter vibrioides (strain ATCC 19089 / CIP 103742 / CB 15) (Caulobacter crescentus).